Consider the following 40-residue polypeptide: Photosystem II reaction center protein J (40 aa).

A helical transmembrane segment spans residues 8–28 (IPLWIIGTVTGIPVIGLIGIF).

This sequence belongs to the PsbJ family. As to quaternary structure, PSII is composed of 1 copy each of membrane proteins PsbA, PsbB, PsbC, PsbD, PsbE, PsbF, PsbH, PsbI, PsbJ, PsbK, PsbL, PsbM, PsbT, PsbX, PsbY, PsbZ, Psb30/Ycf12, at least 3 peripheral proteins of the oxygen-evolving complex and a large number of cofactors. It forms dimeric complexes.

It is found in the plastid. Its subcellular location is the chloroplast thylakoid membrane. Functionally, one of the components of the core complex of photosystem II (PSII). PSII is a light-driven water:plastoquinone oxidoreductase that uses light energy to abstract electrons from H(2)O, generating O(2) and a proton gradient subsequently used for ATP formation. It consists of a core antenna complex that captures photons, and an electron transfer chain that converts photonic excitation into a charge separation. The protein is Photosystem II reaction center protein J of Citrus sinensis (Sweet orange).